Reading from the N-terminus, the 648-residue chain is Adhesion G-protein coupled receptor G1 (648 aa).

The first 24 residues, 1–24 (MKQNPAKTARMWIIICLLFVLGQA), serve as a signal peptide directing secretion. Topologically, residues 25-370 (TDNDRDFKMC…STVRHLKALT (346 aa)) are extracellular. A disulfide bridge links C34 with C96. Residues N62, N91, N114, N146, N222, N262, and N286 are each glycosylated (N-linked (GlcNAc...) asparagine). An intrachain disulfide couples C127 to C176. The GAIN-B domain occupies 214–361 (MDEEFTGHNF…AILVQVEQKS (148 aa)). Cystine bridges form between C313-C343 and C331-C345. Residues 313-361 (CVSWDTKQDNEVNWKDDGCDTVKINEEQTECHCNHLTYFAILVQVEQKS) are GPS. The tract at residues 349–361 (TYFAILVQVEQKS) is stachel. The helical transmembrane segment at 371 to 391 (FITAVGCAVSLVSCLVLFYWL) threads the bilayer. At 392-408 (CKRRRGKKNQISLVHRG) the chain is on the cytoplasmic side. A helical transmembrane segment spans residues 409–429 (LVVAIFLLCLFFILTGILANV). The Extracellular segment spans residues 430–443 (ANETVCQLTGSLLH). Residue N431 is glycosylated (N-linked (GlcNAc...) asparagine). The chain crosses the membrane as a helical span at residues 444–464 (YGLLSTLCWMAMEVFHTFLLV). Residues 465 to 471 (RKVFNSP) lie on the Cytoplasmic side of the membrane. A helical transmembrane segment spans residues 472–492 (LPIWIFYLMGFGFPFLLVSIL). At 493–530 (LSVGDIYGERKIKPSDDVNNPYRMCWMTEGDKSQLAHY) the chain is on the extracellular side. Residues 531-551 (IINIGLLAVVVSSGLVMLFLV) form a helical membrane-spanning segment. Residues 552-563 (VREIRNRPDWKK) lie on the Cytoplasmic side of the membrane. Residues 564–586 (IHVAFLSIWGLTCLYGTTWALGF) traverse the membrane as a helical segment. Topologically, residues 587–595 (LDFGPFSEV) are extracellular. A helical transmembrane segment spans residues 596–618 (TLFLFCIINSLQGFFLMLRYYAL). The Cytoplasmic segment spans residues 619-648 (ERMKKKDVSSSDGSSSGSSKQHMLQTNEKS).

Belongs to the G-protein coupled receptor 2 family. LN-TM7 subfamily. In terms of assembly, heterodimer of 2 chains generated by proteolytic processing; the large extracellular N-terminal fragment (ADGRG1 NT) and the membrane-bound C-terminal fragment (ADGRG1-CT) predominantly remain associated and non-covalently linked. Post-translationally, autoproteolytically cleaved into 2 fragments; the large extracellular N-terminal fragment (ADGRG1 NT) and the membrane-bound C-terminal fragment (ADGRG1 CT) predominantly remain associated and non-covalently linked.

It localises to the cell membrane. Its activity is regulated as follows. Forms a heterodimer of 2 chains generated by proteolytic processing that remain associated through non-covalent interactions mediated by the GAIN-B domain. In the inactivated receptor, the Stachel sequence (also named stalk) is embedded in the GAIN-B domain, where it adopts a beta-strand conformation. On activation, the Stachel moves into the 7 transmembrane region and adopts a twisted hook-shaped configuration that forms contacts within the receptor, leading to coupling of a G-alpha protein, which activates signaling. The cleaved GAIN-B and N-terminal domains can then dissociate from the rest of the receptor. Functionally, adhesion G-protein coupled receptor (aGPCR), which is involved in oligodendrocyte development and maintenance of peripheral myelin. Ligand binding causes a conformation change that triggers signaling via guanine nucleotide-binding proteins (G proteins) and modulates the activity of downstream effectors, such as RhoA pathway. Adgrg1 is coupled to G(12) and/or G(13) G proteins (gna12 and gna13, respectively) and mediates the activation Rho small GTPases. Adgrg1-dependent RhoA signaling promotes timely radial sorting of axons. Required to establish proper myelin thickness and facilitate organization of the myelin sheath in the mature peripheral nervous system. This chain is Adhesion G-protein coupled receptor G1, found in Danio rerio (Zebrafish).